Consider the following 206-residue polypeptide: Small ribosomal subunit protein uS4 (206 aa).

The segment at 28–52 (YLDRRPYAPGQHGQRRGRGRPSDYS) is disordered. Residues 96–171 (RRLDNVVFRM…QKRRRVSPWI (76 aa)) enclose the S4 RNA-binding domain.

The protein belongs to the universal ribosomal protein uS4 family. Part of the 30S ribosomal subunit. Contacts protein S5. The interaction surface between S4 and S5 is involved in control of translational fidelity.

Functionally, one of the primary rRNA binding proteins, it binds directly to 16S rRNA where it nucleates assembly of the body of the 30S subunit. With S5 and S12 plays an important role in translational accuracy. The polypeptide is Small ribosomal subunit protein uS4 (Deinococcus geothermalis (strain DSM 11300 / CIP 105573 / AG-3a)).